Here is a 151-residue protein sequence, read N- to C-terminus: 3-hydroxyacyl-[acyl-carrier-protein] dehydratase FabZ (151 aa).

Histidine 52 is an active-site residue.

Belongs to the thioester dehydratase family. FabZ subfamily.

The protein resides in the cytoplasm. It carries out the reaction a (3R)-hydroxyacyl-[ACP] = a (2E)-enoyl-[ACP] + H2O. Involved in unsaturated fatty acids biosynthesis. Catalyzes the dehydration of short chain beta-hydroxyacyl-ACPs and long chain saturated and unsaturated beta-hydroxyacyl-ACPs. The polypeptide is 3-hydroxyacyl-[acyl-carrier-protein] dehydratase FabZ (fabZ1) (Lactococcus lactis subsp. lactis (strain IL1403) (Streptococcus lactis)).